The primary structure comprises 289 residues: Polyamine aminopropyltransferase (289 aa).

The region spanning 5-238 (TVWHETLHDQ…GIMTFAWATD (234 aa)) is the PABS domain. Residue Q33 participates in S-methyl-5'-thioadenosine binding. H64 and D88 together coordinate spermidine. Residues E108 and 140 to 141 (DG) contribute to the S-methyl-5'-thioadenosine site. D158 (proton acceptor) is an active-site residue. 158 to 161 (DCTD) is a spermidine binding site. Residue P165 participates in S-methyl-5'-thioadenosine binding.

This sequence belongs to the spermidine/spermine synthase family. In terms of assembly, homodimer or homotetramer.

Its subcellular location is the cytoplasm. The enzyme catalyses S-adenosyl 3-(methylsulfanyl)propylamine + putrescine = S-methyl-5'-thioadenosine + spermidine + H(+). It participates in amine and polyamine biosynthesis; spermidine biosynthesis; spermidine from putrescine: step 1/1. Catalyzes the irreversible transfer of a propylamine group from the amino donor S-adenosylmethioninamine (decarboxy-AdoMet) to putrescine (1,4-diaminobutane) to yield spermidine. The sequence is that of Polyamine aminopropyltransferase from Enterobacter sp. (strain 638).